The chain runs to 198 residues: Protein GrpE (198 aa).

Belongs to the GrpE family. In terms of assembly, homodimer.

The protein localises to the cytoplasm. Its function is as follows. Participates actively in the response to hyperosmotic and heat shock by preventing the aggregation of stress-denatured proteins, in association with DnaK and GrpE. It is the nucleotide exchange factor for DnaK and may function as a thermosensor. Unfolded proteins bind initially to DnaJ; upon interaction with the DnaJ-bound protein, DnaK hydrolyzes its bound ATP, resulting in the formation of a stable complex. GrpE releases ADP from DnaK; ATP binding to DnaK triggers the release of the substrate protein, thus completing the reaction cycle. Several rounds of ATP-dependent interactions between DnaJ, DnaK and GrpE are required for fully efficient folding. The protein is Protein GrpE of Vibrio harveyi (Beneckea harveyi).